A 548-amino-acid chain; its full sequence is Esterase-5A (548 aa).

The signal sequence occupies residues 1–19; that stretch reads MHLVRWLICLIQLWIQLGA. A disulfide bridge connects residues Cys87 and Cys106. N-linked (GlcNAc...) asparagine glycosylation is found at Asn95 and Asn116. Ser210 (acyl-ester intermediate) is an active-site residue. Cys262 and Cys274 are joined by a disulfide. N-linked (GlcNAc...) asparagine glycosylation is present at Asn479. Residues Cys518 and Cys539 are joined by a disulfide bond.

It belongs to the type-B carboxylesterase/lipase family.

The protein resides in the secreted. The catalysed reaction is a carboxylic ester + H2O = an alcohol + a carboxylate + H(+). This is Esterase-5A (Est-5A) from Drosophila persimilis (Fruit fly).